The sequence spans 370 residues: Galactose-1-phosphate uridylyltransferase (370 aa).

Residues C51 and C54 each contribute to the Zn(2+) site. UDP-alpha-D-glucose is bound by residues A60 and 76–77 (NG). H121 provides a ligand contact to Zn(2+). Position 166 (N166) interacts with UDP-alpha-D-glucose. Zn(2+) is bound at residue H177. H179 functions as the Tele-UMP-histidine intermediate in the catalytic mechanism. Residue Q181 participates in UDP-alpha-D-glucose binding. Residues E195, H294, H311, and H313 each contribute to the Fe cation site. Residues 326–329 (KFLV) and 331–332 (FE) each bind UDP-alpha-D-glucose.

Belongs to the galactose-1-phosphate uridylyltransferase type 1 family. As to quaternary structure, homodimer. Zn(2+) serves as cofactor.

The catalysed reaction is alpha-D-galactose 1-phosphate + UDP-alpha-D-glucose = alpha-D-glucose 1-phosphate + UDP-alpha-D-galactose. It functions in the pathway carbohydrate metabolism; galactose metabolism. In Kluyveromyces lactis (strain ATCC 8585 / CBS 2359 / DSM 70799 / NBRC 1267 / NRRL Y-1140 / WM37) (Yeast), this protein is Galactose-1-phosphate uridylyltransferase (GAL7).